The sequence spans 123 residues: Small ribosomal subunit protein uS12 (123 aa).

D89 carries the 3-methylthioaspartic acid modification.

This sequence belongs to the universal ribosomal protein uS12 family. As to quaternary structure, part of the 30S ribosomal subunit. Contacts proteins S8 and S17. May interact with IF1 in the 30S initiation complex.

Its function is as follows. With S4 and S5 plays an important role in translational accuracy. Functionally, interacts with and stabilizes bases of the 16S rRNA that are involved in tRNA selection in the A site and with the mRNA backbone. Located at the interface of the 30S and 50S subunits, it traverses the body of the 30S subunit contacting proteins on the other side and probably holding the rRNA structure together. The combined cluster of proteins S8, S12 and S17 appears to hold together the shoulder and platform of the 30S subunit. In Gluconacetobacter diazotrophicus (strain ATCC 49037 / DSM 5601 / CCUG 37298 / CIP 103539 / LMG 7603 / PAl5), this protein is Small ribosomal subunit protein uS12.